The primary structure comprises 704 residues: SH3KBP1-binding protein 1 (704 aa).

Ala2 carries the post-translational modification N-acetylalanine. The BTB domain maps to 19–88 (EVIHLNVGGK…LRTKELDPRG (70 aa)). A disordered region spans residues 146-165 (VGPQQIGGRPAPVRRSNTMP). Phosphothreonine is present on Thr163. WD repeat units follow at residues 233–280 (RLDW…GGSE), 283–322 (VFHL…WQVQ), 324–359 (VQPI…LRMK), 428–466 (VHRS…GMIS), and 548–586 (LECE…DGLG). Residues 609–704 (PLASSRGSFP…LKKTLNETSF (96 aa)) are disordered. Residues 612–631 (SSRGSFPSPSPRTSLTSLHS) show a composition bias toward low complexity. The short motif at 618 to 623 (PSPSPR) is the PXXXPR element. Phosphoserine is present on residues Ser644 and Ser646. A PXXXPR motif is present at residues 678–683 (PTPAPR). At Thr693 the chain carries Phosphothreonine.

The protein belongs to the KCTD3 family. In terms of assembly, monomer. Interacts with CUL3; interaction is direct and forms a 5:5 heterodecamer. Interacts (via PXXXPR motifs) with SH3KBP1 (via SH3 domains). Directly interacts with cathepsin B/CTSB.

Its subcellular location is the lysosome. Its function is as follows. Inhibits CBL-SH3KBP1 complex mediated down-regulation of EGFR signaling by sequestration of SH3KBP1. Binds to SH3KBP1 and prevents its interaction with CBL and inhibits translocation of SH3KBP1 to EGFR containing vesicles upon EGF stimulation. This is SH3KBP1-binding protein 1 (Shkbp1) from Mus musculus (Mouse).